The sequence spans 1377 residues: DNA-directed RNA polymerase subunit beta'' (1377 aa).

Residues cysteine 220, cysteine 291, cysteine 298, and cysteine 301 each contribute to the Zn(2+) site.

This sequence belongs to the RNA polymerase beta' chain family. RpoC2 subfamily. In terms of assembly, in plastids the minimal PEP RNA polymerase catalytic core is composed of four subunits: alpha, beta, beta', and beta''. When a (nuclear-encoded) sigma factor is associated with the core the holoenzyme is formed, which can initiate transcription. Requires Zn(2+) as cofactor.

Its subcellular location is the plastid. It localises to the chloroplast. The enzyme catalyses RNA(n) + a ribonucleoside 5'-triphosphate = RNA(n+1) + diphosphate. In terms of biological role, DNA-dependent RNA polymerase catalyzes the transcription of DNA into RNA using the four ribonucleoside triphosphates as substrates. This is DNA-directed RNA polymerase subunit beta'' from Nandina domestica (Heavenly bamboo).